Reading from the N-terminus, the 184-residue chain is NADH-dependent flavin reductase subunit 2 (184 aa).

The protein belongs to the NADH-dependent flavin reductase family. As to quaternary structure, requires LJ_0548 for activity, but the exact composition of the enzyme is unclear.

The catalysed reaction is a reduced flavin + NAD(+) = an oxidized flavin + NADH + 2 H(+). Its function is as follows. Component of an enzyme that catalyzes the reduction of free flavins (FMN, FAD and riboflavin) by NADH; the reduced flavins produced by this reaction likely spontaneously react with oxygen, yielding hydrogen peroxide. Is responsible for the major H(2)O(2) production in L.johnsonii in the presence of oxygen. Cannot use NADPH instead of NADH as the electron donor. This chain is NADH-dependent flavin reductase subunit 2 (nfr2), found in Lactobacillus johnsonii (strain CNCM I-12250 / La1 / NCC 533).